A 147-amino-acid polypeptide reads, in one-letter code: SsrA-binding protein (147 aa).

It belongs to the SmpB family.

Its subcellular location is the cytoplasm. In terms of biological role, required for rescue of stalled ribosomes mediated by trans-translation. Binds to transfer-messenger RNA (tmRNA), required for stable association of tmRNA with ribosomes. tmRNA and SmpB together mimic tRNA shape, replacing the anticodon stem-loop with SmpB. tmRNA is encoded by the ssrA gene; the 2 termini fold to resemble tRNA(Ala) and it encodes a 'tag peptide', a short internal open reading frame. During trans-translation Ala-aminoacylated tmRNA acts like a tRNA, entering the A-site of stalled ribosomes, displacing the stalled mRNA. The ribosome then switches to translate the ORF on the tmRNA; the nascent peptide is terminated with the 'tag peptide' encoded by the tmRNA and targeted for degradation. The ribosome is freed to recommence translation, which seems to be the essential function of trans-translation. The chain is SsrA-binding protein from Mycoplasma pneumoniae (strain ATCC 29342 / M129 / Subtype 1) (Mycoplasmoides pneumoniae).